A 116-amino-acid polypeptide reads, in one-letter code: Methionine-R-sulfoxide reductase B1 (116 aa).

A MsrB domain is found at 1-106; it reads MSFCSFFGGE…FSSSLKFVPK (106 aa). Zn(2+) is bound by residues C23, C26, C71, and C74. U95 serves as the catalytic Nucleophile. A non-standard amino acid (selenocysteine) is located at residue U95.

Belongs to the MsrB Met sulfoxide reductase family. It depends on Zn(2+) as a cofactor. Truncated MSRB1/SEPX1 proteins produced by failed UGA/Sec decoding are ubiquitinated by the CRL2(FEM1C) E3 ubiquitin-protein ligase complex.

It is found in the cytoplasm. It localises to the nucleus. The protein localises to the cytoskeleton. The enzyme catalyses L-methionyl-[protein] + [thioredoxin]-disulfide + H2O = L-methionyl-(R)-S-oxide-[protein] + [thioredoxin]-dithiol. It carries out the reaction [thioredoxin]-disulfide + L-methionine + H2O = L-methionine (R)-S-oxide + [thioredoxin]-dithiol. In terms of biological role, methionine-sulfoxide reductase that specifically reduces methionine (R)-sulfoxide back to methionine. While in many cases, methionine oxidation is the result of random oxidation following oxidative stress, methionine oxidation is also a post-translational modification that takes place on specific residue. Acts as a regulator of actin assembly by reducing methionine (R)-sulfoxide mediated by MICALs (MICAL1, MICAL2 or MICAL3) on actin, thereby promoting filament repolymerization. Plays a role in innate immunity by reducing oxidized actin, leading to actin repolymerization in macrophages. The chain is Methionine-R-sulfoxide reductase B1 (Msrb1) from Mus musculus (Mouse).